We begin with the raw amino-acid sequence, 255 residues long: 5-oxoprolinase subunit A (255 aa).

This sequence belongs to the LamB/PxpA family. As to quaternary structure, forms a complex composed of PxpA, PxpB and PxpC.

The catalysed reaction is 5-oxo-L-proline + ATP + 2 H2O = L-glutamate + ADP + phosphate + H(+). Its function is as follows. Catalyzes the cleavage of 5-oxoproline to form L-glutamate coupled to the hydrolysis of ATP to ADP and inorganic phosphate. The protein is 5-oxoprolinase subunit A of Campylobacter jejuni subsp. doylei (strain ATCC BAA-1458 / RM4099 / 269.97).